An 866-amino-acid chain; its full sequence is Retinoblastoma-related protein 2 (866 aa).

The domain A stretch occupies residues 274-475 (TPITSAMTTA…EKGSSLYNSL (202 aa)). Residues 274–721 (TPITSAMTTA…NEVFVPAAKP (448 aa)) are pocket. Residues 476–593 (IVARPSVASE…PVGGNEKCAD (118 aa)) form a spacer region. The tract at residues 513-551 (LPATPSKKRAAGRDDNADPRSPKRPCNESRSPVVEHNLQ) is disordered. Over residues 523–539 (AGRDDNADPRSPKRPCN) the composition is skewed to basic and acidic residues. The tract at residues 594-721 (VTIQIFFSKI…NEVFVPAAKP (128 aa)) is domain B. Disordered regions lie at residues 731-754 (TRPE…PFPN) and 839-866 (SLGQ…KPDT). Positions 841-850 (GQPNGGSTSL) are enriched in polar residues.

It belongs to the retinoblastoma protein (RB) family. Ubiquitous.

It is found in the nucleus. Its function is as follows. Regulator of biological processes that recruits a histone deacetylase to control gene transcription. May play a role in the entry into mitosis, negatively regulating the cell proliferation. Formation of stable complexes with geminiviridae replication-associated proteins may create a cellular environment which favors viral DNA replication. This chain is Retinoblastoma-related protein 2 (RBR2), found in Zea mays (Maize).